Here is a 390-residue protein sequence, read N- to C-terminus: VIRIPLHKFTSIRRTMSEAAGXVXXLIAKGPISKYATGEPAVRQGPIPELLKNYMDAQYYGEIGIGTPPQCFTVVFDTGSANLWVPSIHCKLLDIACWTHRKYNSDKSSTYVKNGTTFDIHYGSGSLSGYLSQDTVSVPCNPSSSSPGGVTVQRQTFGEAIKQPGVVFIAAKFDGILGMAYPRISVNNVLPVFDNLMQQKLVDKNVFSFFLNRDPKAQPGGELMLGGTDSKYYRGSLMFHNVTRQAYWQIHMDQLDVGSSLTVCKGGCEAIVDTGTSLIVGPVEEVRELQKAIGAVPLIQGEYMIPCEKVSSLPEVTVKLGGKDYALSPEDYALKVSQAETTVCLSGFMGMDIPPPGGPLWILGDVFIGRYYTVFDRDQNRVGLAEAARL.

Residues 1 to 44 (VIRIPLHKFTSIRRTMSEAAGXVXXLIAKGPISKYATGEPAVRQ) constitute a propeptide, activation peptide. One can recognise a Peptidase A1 domain in the interval 59–385 (YYGEIGIGTP…DRDQNRVGLA (327 aa)). 2 cysteine pairs are disulfide-bonded: C71/C140 and C90/C97. Residue D77 is part of the active site. N-linked (GlcNAc...) asparagine glycosylation is found at N114 and N241. Cysteines 264 and 268 form a disulfide. Residue D273 is part of the active site. A disulfide bridge links C307 with C344.

The protein belongs to the peptidase A1 family. As to quaternary structure, consists of a light chain and a heavy chain. Interacts with ADAM30; this leads to activation of CTSD. Interacts with GRN; stabilizes CTSD; increases its proteolytic activity. N- and O-glycosylated. Post-translationally, undergoes proteolytic cleavage and activation by ADAM30.

The protein resides in the lysosome. Its subcellular location is the melanosome. It localises to the secreted. The protein localises to the extracellular space. The enzyme catalyses Specificity similar to, but narrower than, that of pepsin A. Does not cleave the 4-Gln-|-His-5 bond in B chain of insulin.. Its function is as follows. Acid protease active in intracellular protein breakdown. Plays a role in APP processing following cleavage and activation by ADAM30 which leads to APP degradation. The polypeptide is Cathepsin D (CTSD) (Bos taurus (Bovine)).